A 38-amino-acid polypeptide reads, in one-letter code: Cytochrome b6-f complex subunit 5 (38 aa).

The helical transmembrane segment at 5–25 (LLLGIVLGLIPITLAGLFVAA) threads the bilayer.

It belongs to the PetG family. As to quaternary structure, the 4 large subunits of the cytochrome b6-f complex are cytochrome b6, subunit IV (17 kDa polypeptide, PetD), cytochrome f and the Rieske protein, while the 4 small subunits are PetG, PetL, PetM and PetN. The complex functions as a dimer.

The protein resides in the cellular thylakoid membrane. In terms of biological role, component of the cytochrome b6-f complex, which mediates electron transfer between photosystem II (PSII) and photosystem I (PSI), cyclic electron flow around PSI, and state transitions. PetG is required for either the stability or assembly of the cytochrome b6-f complex. This Rippkaea orientalis (strain PCC 8801 / RF-1) (Cyanothece sp. (strain PCC 8801)) protein is Cytochrome b6-f complex subunit 5.